A 1219-amino-acid polypeptide reads, in one-letter code: Regulator of telomere elongation helicase 1 (1219 aa).

Residues Asn7–His296 enclose the Helicase ATP-binding domain. Ser42 to Thr49 contributes to the ATP binding site. Cys145, Cys163, Cys172, and Cys207 together coordinate [4Fe-4S] cluster. The Nuclear localization signal signature appears at Lys151 to Val167. The DEAH box motif lies at Asp250 to His253. Disordered stretches follow at residues Thr287–Pro306, Pro757–Thr786, Glu839–Lys877, Arg979–Lys1005, Asp1017–Lys1054, Cys1132–Glu1151, and Leu1159–Leu1219. Low complexity predominate over residues Pro757–Pro766. A compositionally biased stretch (basic and acidic residues) spans Ser863 to Gly873. Positions Pro871 to Lys877 match the Nuclear localization signal motif. The span at Lys1176–Leu1185 shows a compositional bias: polar residues. The short motif at Gln1178–Leu1185 is the PIP-box element. Residues Ala1200–Leu1219 show a composition bias toward low complexity.

The protein belongs to the helicase family. RAD3/XPD subfamily. Interacts with TERF1. Interacts (via PIP-box) with PCNA; the interaction is direct and essential for suppressing telomere fragility. Interacts with MMS19; the interaction mediates the association of RTEL1 with the cytosolic iron-sulfur protein assembly (CIA) complex.

It localises to the nucleus. The catalysed reaction is ATP + H2O = ADP + phosphate + H(+). A probable ATP-dependent DNA helicase implicated in telomere-length regulation, DNA repair and the maintenance of genomic stability. Acts as an anti-recombinase to counteract toxic recombination and limit crossover during meiosis. Regulates meiotic recombination and crossover homeostasis by physically dissociating strand invasion events and thereby promotes noncrossover repair by meiotic synthesis dependent strand annealing (SDSA) as well as disassembly of D loop recombination intermediates. Also disassembles T loops and prevents telomere fragility by counteracting telomeric G4-DNA structures, which together ensure the dynamics and stability of the telomere. The chain is Regulator of telomere elongation helicase 1 from Homo sapiens (Human).